A 357-amino-acid chain; its full sequence is Heat-inducible transcription repressor HrcA (357 aa).

This sequence belongs to the HrcA family.

In terms of biological role, negative regulator of class I heat shock genes (grpE-dnaK-dnaJ and groELS operons). Prevents heat-shock induction of these operons. The chain is Heat-inducible transcription repressor HrcA from Chlorobium limicola (strain DSM 245 / NBRC 103803 / 6330).